The chain runs to 219 residues: UPF0319 protein MS0844 (219 aa).

Positions 1-21 (MKFRLTALAVAALLTSTASFA) are cleaved as a signal peptide.

It belongs to the UPF0319 family.

The sequence is that of UPF0319 protein MS0844 from Mannheimia succiniciproducens (strain KCTC 0769BP / MBEL55E).